The following is a 129-amino-acid chain: GEL complex subunit OPTI (129 aa).

Residues 1–44 (MSGGRRKEEPPQPQLANGALKVSVWSKVLRSDAAWDDKDEFLDV) lie on the Cytoplasmic side of the membrane. A helical transmembrane segment spans residues 45 to 65 (IYWFRQIIALVLGVIWGVLPL). Residue arginine 66 is a topological domain, lumenal. Residues 67–84 (GFLGIAGFCLINAGVLYL) traverse the membrane as a helical segment. Over 85 to 103 (YFSNYLQIDEEEYGGTWEL) the chain is Cytoplasmic. A helical membrane pass occupies residues 104-127 (TKEGFMTSFALFMVIWIIFYTAIH). The Lumenal segment spans residues 128 to 129 (YD).

This sequence belongs to the EMC6 family. In terms of assembly, component of the GET- and EMC-like (GEL) complex, composed of RAB5IF/OPTI and TMCO1. The GEL complex is part of the multi-pass translocon (MPT) complex, composed of three subcomplexes, the GEL complex (composed of RAB5IF/OPTI and TMCO1), the BOS complex (composed of NCLN/Nicalin, NOMO1 and TMEM147) and the PAT complex (composed of WDR83OS/Asterix and CCDC47). The MPT complex associates with the SEC61 complex. Interacts with NDUFS3, NDUFA4, NDUFV1, NDUFA9 and NDUFS8 of the mitochondrial membrane respiratory chain NADH dehydrogenase (Complex I). Interacts with UQCRC2 of the ubiquinol-cytochrome c reductase complex (Complex III). Interacts with COX5A and COX7C of the cytochrome c oxidase complex (Complex IV). As to expression, expressed in neuronal cells.

The protein localises to the endoplasmic reticulum membrane. Its subcellular location is the mitochondrion inner membrane. In terms of biological role, component of the multi-pass translocon (MPT) complex that mediates insertion of multi-pass membrane proteins into the lipid bilayer of membranes. The MPT complex takes over after the SEC61 complex: following membrane insertion of the first few transmembrane segments of proteins by the SEC61 complex, the MPT complex occludes the lateral gate of the SEC61 complex to promote insertion of subsequent transmembrane regions. Within the MPT complex, the GEL subcomplex may mediate insertion of transmembrane regions into the membrane. In addition to its role in multi-pass membrane insertion, RAB5IF/OPTI also acts as an assembly factor for mitochondrial respiratory complexes. This chain is GEL complex subunit OPTI, found in Mus musculus (Mouse).